A 210-amino-acid polypeptide reads, in one-letter code: Large ribosomal subunit protein uL3 (210 aa).

A disordered region spans residues 125–154 (RHGFRGGPKTHGQSDRHRAPGSIGAGTTPG).

Belongs to the universal ribosomal protein uL3 family. Part of the 50S ribosomal subunit. Forms a cluster with proteins L14 and L19.

Functionally, one of the primary rRNA binding proteins, it binds directly near the 3'-end of the 23S rRNA, where it nucleates assembly of the 50S subunit. The polypeptide is Large ribosomal subunit protein uL3 (Chloroflexus aggregans (strain MD-66 / DSM 9485)).